The chain runs to 61 residues: Early 3 Conserved Region 1-alpha protein (61 aa).

At 1–14 the chain is on the lumenal side; that stretch reads MSNSSNSTSLSNFS. N-linked (GlcNAc...) asparagine; by host glycans are attached at residues N3, N6, and N12. Residues 15–35 form a helical membrane-spanning segment; sequence GIGVGVILTLVILFILILALL. At 36 to 61 the chain is on the cytoplasmic side; it reads CLRVAACCTHVCTYCQLFKRWGQHPR.

It belongs to the adenoviridae E3-CR1 family. Interacts with E3 RID alpha and E3 RID beta. Only 1 of 3 three potential glycosylation sites is glycosylated. Oligosaccharides are not processed from high mannose to the complex type because the protein is retained in the endoplasmic reticulum.

The protein localises to the host endoplasmic reticulum membrane. The protein resides in the host cell membrane. Functionally, prevents infected cell apoptosis induced by the host immune system. May act by down-regulating host TRAIL receptors. May act in complex with E3 RID alpha and beta. May play a role on cellular apoptosis regulation in the ER. The polypeptide is Early 3 Conserved Region 1-alpha protein (Human adenovirus C serotype 2 (HAdV-2)).